A 34-amino-acid polypeptide reads, in one-letter code: Photosystem II reaction center protein M (34 aa).

A helical membrane pass occupies residues 5-25 (ILAFSATALLILFPTALLLIL).

This sequence belongs to the PsbM family. In terms of assembly, PSII is composed of 1 copy each of membrane proteins PsbA, PsbB, PsbC, PsbD, PsbE, PsbF, PsbH, PsbI, PsbJ, PsbK, PsbL, PsbM, PsbT, PsbX, PsbY, PsbZ, Psb30/Ycf12, at least 3 peripheral proteins of the oxygen-evolving complex and a large number of cofactors. It forms dimeric complexes.

The protein resides in the plastid membrane. One of the components of the core complex of photosystem II (PSII). PSII is a light-driven water:plastoquinone oxidoreductase that uses light energy to abstract electrons from H(2)O, generating O(2) and a proton gradient subsequently used for ATP formation. It consists of a core antenna complex that captures photons, and an electron transfer chain that converts photonic excitation into a charge separation. This subunit is found at the monomer-monomer interface. In Cuscuta gronovii (Common dodder), this protein is Photosystem II reaction center protein M.